Here is a 607-residue protein sequence, read N- to C-terminus: Guanine nucleotide-binding protein-like 1 (607 aa).

The segment covering 1–14 (MPRKKPFSVKQKKK) has biased composition (basic residues). The tract at residues 1 to 81 (MPRKKPFSVK…GPRGYDPNRY (81 aa)) is disordered. Residues 15–26 (QLQDKRERKRGL) show a composition bias toward basic and acidic residues. 3 positions are modified to phosphoserine: S32, S33, and S34. Phosphothreonine occurs at positions 48 and 50. S51 and S68 each carry phosphoserine. One can recognise a CP-type G domain in the interval 178–418 (WRQLWRVLEM…LCDCPGLIFP (241 aa)). 225-228 (NKVD) contributes to the GTP binding site. S324 bears the Phosphoserine mark. GTP is bound by residues 367-374 (GFPNVGKS) and 411-415 (DCPGL). The disordered stretch occupies residues 547–607 (GPAGDEEEEE…PYALLGEDEC (61 aa)). Positions 550–584 (GDEEEEEEEELSSSCEEEGEEDRDADEEGEGDEET) are enriched in acidic residues. Phosphoserine occurs at positions 561, 562, and 563.

This sequence belongs to the TRAFAC class YlqF/YawG GTPase family.

Functionally, possible regulatory or functional link with the histocompatibility cluster. In Homo sapiens (Human), this protein is Guanine nucleotide-binding protein-like 1 (GNL1).